The sequence spans 259 residues: DNA repair protein RecO (259 aa).

This sequence belongs to the RecO family.

Its function is as follows. Involved in DNA repair and RecF pathway recombination. The chain is DNA repair protein RecO from Leuconostoc mesenteroides subsp. mesenteroides (strain ATCC 8293 / DSM 20343 / BCRC 11652 / CCM 1803 / JCM 6124 / NCDO 523 / NBRC 100496 / NCIMB 8023 / NCTC 12954 / NRRL B-1118 / 37Y).